The sequence spans 118 residues: Thioredoxin-like protein CXXS1 (118 aa).

A Thioredoxin domain is found at 2–110; that stretch reads ARVVKIDSAE…IKKRVDGFVQ (109 aa).

This sequence belongs to the thioredoxin family. As to expression, ubiquitous.

The protein localises to the cytoplasm. Its function is as follows. Possesses low disulfide reductase activity, but efficient protein disulfide isomerase activity. Does not possess deglutathionylation activity. The protein is Thioredoxin-like protein CXXS1 (CXXS1) of Arabidopsis thaliana (Mouse-ear cress).